We begin with the raw amino-acid sequence, 529 residues long: Phosphoenolpyruvate carboxykinase (ATP) (529 aa).

Residues Arg55, Tyr190, and Lys196 each contribute to the substrate site. ATP contacts are provided by residues Lys196, His215, and 231–239 (GLSGTGKTT). The Mn(2+) site is built by Lys196 and His215. Asp252 contacts Mn(2+). The ATP site is built by Glu280, Arg317, and Thr442. Arg317 provides a ligand contact to substrate.

The protein belongs to the phosphoenolpyruvate carboxykinase (ATP) family. Mn(2+) serves as cofactor.

The protein resides in the cytoplasm. The enzyme catalyses oxaloacetate + ATP = phosphoenolpyruvate + ADP + CO2. Its pathway is carbohydrate biosynthesis; gluconeogenesis. Its function is as follows. Involved in the gluconeogenesis. Catalyzes the conversion of oxaloacetate (OAA) to phosphoenolpyruvate (PEP) through direct phosphoryl transfer between the nucleoside triphosphate and OAA. This is Phosphoenolpyruvate carboxykinase (ATP) from Deinococcus geothermalis (strain DSM 11300 / CIP 105573 / AG-3a).